Reading from the N-terminus, the 220-residue chain is Pyrrolidone-carboxylate peptidase (220 aa).

Catalysis depends on residues E80, C143, and H167.

The protein belongs to the peptidase C15 family. In terms of assembly, homotetramer.

It localises to the cytoplasm. It carries out the reaction Release of an N-terminal pyroglutamyl group from a polypeptide, the second amino acid generally not being Pro.. Its function is as follows. Removes 5-oxoproline from various penultimate amino acid residues except L-proline. The protein is Pyrrolidone-carboxylate peptidase (pcp) of Thermococcus litoralis (strain ATCC 51850 / DSM 5473 / JCM 8560 / NS-C).